A 382-amino-acid chain; its full sequence is Lipoyl synthase, mitochondrial (382 aa).

Residues 1-30 constitute a mitochondrion transit peptide; it reads MHGRRHLAASLARALTYAPSRSISSTPSLL. Residues 25-34 show a composition bias toward polar residues; that stretch reads STPSLLQTLD. The disordered stretch occupies residues 25–46; the sequence is STPSLLQTLDPSTPSPAAAPPT. 7 residues coordinate [4Fe-4S] cluster: Cys-112, Cys-117, Cys-123, Cys-143, Cys-147, Cys-150, and Ser-359. A Radical SAM core domain is found at 128–348; it reads ETGTATATIM…RSLGVDMGFR (221 aa).

The protein belongs to the radical SAM superfamily. Lipoyl synthase family. It depends on [4Fe-4S] cluster as a cofactor.

The protein localises to the mitochondrion. It carries out the reaction [[Fe-S] cluster scaffold protein carrying a second [4Fe-4S](2+) cluster] + N(6)-octanoyl-L-lysyl-[protein] + 2 oxidized [2Fe-2S]-[ferredoxin] + 2 S-adenosyl-L-methionine + 4 H(+) = [[Fe-S] cluster scaffold protein] + N(6)-[(R)-dihydrolipoyl]-L-lysyl-[protein] + 4 Fe(3+) + 2 hydrogen sulfide + 2 5'-deoxyadenosine + 2 L-methionine + 2 reduced [2Fe-2S]-[ferredoxin]. Its pathway is protein modification; protein lipoylation via endogenous pathway; protein N(6)-(lipoyl)lysine from octanoyl-[acyl-carrier-protein]: step 2/2. In terms of biological role, catalyzes the radical-mediated insertion of two sulfur atoms into the C-6 and C-8 positions of the octanoyl moiety bound to the lipoyl domains of lipoate-dependent enzymes, thereby converting the octanoylated domains into lipoylated derivatives. The sequence is that of Lipoyl synthase, mitochondrial from Oryza sativa subsp. japonica (Rice).